A 121-amino-acid chain; its full sequence is MALNIENIIAEIKEATILELNDLVKAIEEEFGVTAAAPVAAAAASGEAAAAKDSFDVELTAAGDKKVGVIKVVREITGEGLKEAKAIVDNAPSVIKEGASEAEANEIKEKLEAAGASVTLK.

It belongs to the bacterial ribosomal protein bL12 family. Homodimer. Part of the ribosomal stalk of the 50S ribosomal subunit. Forms a multimeric L10(L12)X complex, where L10 forms an elongated spine to which 2 to 4 L12 dimers bind in a sequential fashion. Binds GTP-bound translation factors.

Its function is as follows. Forms part of the ribosomal stalk which helps the ribosome interact with GTP-bound translation factors. Is thus essential for accurate translation. In Streptococcus agalactiae serotype Ia (strain ATCC 27591 / A909 / CDC SS700), this protein is Large ribosomal subunit protein bL12.